A 323-amino-acid polypeptide reads, in one-letter code: Sphingolipid delta(4)-desaturase DES1 (323 aa).

Glycine 2 is lipidated: N-myristoyl glycine. The next 2 helical transmembrane spans lie at 41–61 and 68–88; these read PNLIWIVTSMLLVQLASFYLV and WLMFWSYAFGSCLNHSMTLAI. A Histidine box-1 motif is present at residues 89–93; it reads HEISH. The chain crosses the membrane as a helical span at residues 104 to 124; the sequence is WNRWFGMFANLSLGVPYSISF. The Histidine box-2 motif lies at 128-132; sequence HMDHH. A run of 3 helical transmembrane segments spans residues 152 to 172, 184 to 204, and 210 to 230; these read FFCTTLRKLVWVILQPLFYAF, HLEVINTVIQVTFDVLVYYVF, and VYMLAASLLGLGLHPISGHFI. The Histidine box-3 signature appears at 259–263; the sequence is HNEHH. At serine 307 the chain carries Phosphoserine.

This sequence belongs to the fatty acid desaturase type 1 family. DEGS subfamily. Interacts with RLBP1; the interaction increases synthesis of chromophore-precursors by DEGS1. Post-translationally, myristoylation can target the enzyme to the mitochondria leading to an increase in ceramide levels.

The protein localises to the mitochondrion membrane. It localises to the endoplasmic reticulum membrane. It carries out the reaction an N-acylsphinganine + 2 Fe(II)-[cytochrome b5] + O2 + 2 H(+) = an N-acylsphing-4-enine + 2 Fe(III)-[cytochrome b5] + 2 H2O. The catalysed reaction is all-trans-retinol = 11-cis-retinol. It catalyses the reaction all-trans-retinol = 9-cis-retinol. The enzyme catalyses all-trans-retinol = 13-cis-retinol. It carries out the reaction 11-cis-retinol = 13-cis-retinol. The catalysed reaction is 11-cis-retinol = 9-cis-retinol. In terms of biological role, has sphingolipid-delta-4-desaturase activity. Converts D-erythro-sphinganine to D-erythro-sphingosine (E-sphing-4-enine). Catalyzes the equilibrium isomerization of retinols. This Rattus norvegicus (Rat) protein is Sphingolipid delta(4)-desaturase DES1.